A 219-amino-acid polypeptide reads, in one-letter code: MQEHSPIVLLGGTFDPIHFGHLRTALELQQHFGESAEVRLIPCGDPRHRSAPKASGEHRLAMLRLALEGEPSLRIDEVEVRRTGASYTVDTLLELRQEVGNLRPLIFVMGTDAFESLPKWRRWLEIIQLAHIMVVNRPGWSFCEQGELGDFLRQHSAESNNDLIRQPAGKVGFITLTQMGISSSKVRELIGLRLSPRFLLPDSVWRYIRQHRLYGAVNA.

This sequence belongs to the NadD family.

The catalysed reaction is nicotinate beta-D-ribonucleotide + ATP + H(+) = deamido-NAD(+) + diphosphate. Its pathway is cofactor biosynthesis; NAD(+) biosynthesis; deamido-NAD(+) from nicotinate D-ribonucleotide: step 1/1. In terms of biological role, catalyzes the reversible adenylation of nicotinate mononucleotide (NaMN) to nicotinic acid adenine dinucleotide (NaAD). This chain is Probable nicotinate-nucleotide adenylyltransferase, found in Hahella chejuensis (strain KCTC 2396).